Here is a 473-residue protein sequence, read N- to C-terminus: Ribulose bisphosphate carboxylase large chain (473 aa).

Position 8 is an N6,N6,N6-trimethyllysine (Lys-8). Positions 117 and 167 each coordinate substrate. Lys-169 acts as the Proton acceptor in catalysis. Lys-171 is a binding site for substrate. 3 residues coordinate Mg(2+): Lys-195, Asp-197, and Glu-198. An N6-carboxylysine modification is found at Lys-195. The active-site Proton acceptor is His-288. Substrate contacts are provided by Arg-289, His-321, and Ser-373.

The protein belongs to the RuBisCO large chain family. Type I subfamily. Heterohexadecamer of 8 large chains and 8 small chains; disulfide-linked. The disulfide link is formed within the large subunit homodimers. Mg(2+) is required as a cofactor. Post-translationally, the disulfide bond which can form in the large chain dimeric partners within the hexadecamer appears to be associated with oxidative stress and protein turnover.

Its subcellular location is the plastid. The protein resides in the chloroplast. It catalyses the reaction 2 (2R)-3-phosphoglycerate + 2 H(+) = D-ribulose 1,5-bisphosphate + CO2 + H2O. The catalysed reaction is D-ribulose 1,5-bisphosphate + O2 = 2-phosphoglycolate + (2R)-3-phosphoglycerate + 2 H(+). Its function is as follows. RuBisCO catalyzes two reactions: the carboxylation of D-ribulose 1,5-bisphosphate, the primary event in carbon dioxide fixation, as well as the oxidative fragmentation of the pentose substrate in the photorespiration process. Both reactions occur simultaneously and in competition at the same active site. This is Ribulose bisphosphate carboxylase large chain from Amorphophallus titanum (Titan arum).